The chain runs to 847 residues: Protein IRS1 (847 aa).

3 disordered regions span residues 1 to 82 (MAQR…NFWH), 607 to 627 (WLME…ATMP), and 715 to 847 (QVIP…HVHH). The segment covering 16 to 25 (RGRGAGGPSG) has biased composition (gly residues). Low complexity predominate over residues 26-56 (VGSSPPSSCVPMGATSTAGTGASAAPTATPG). Residues 723–733 (EPEDDDEDPTY) show a composition bias toward acidic residues. Residues 833 to 847 (RPKKCQTHAPHHVHH) are compositionally biased toward basic residues.

It belongs to the herpesviridae US22 family. Interacts (via N-terminus) with the viral DNA polymerase accessory subunit UL44. Interacts (via C-terminus) with host EIF2AK2.

The protein resides in the virion. The protein localises to the host cytoplasm. Its subcellular location is the host nucleus. Its function is as follows. Acts as a transactivator along with IE2, and is required for oriLyt-dependent DNA replication in the transient transfection replication assay using native promoters. The protein is Protein IRS1 (IRS1) of Human cytomegalovirus (strain Merlin) (HHV-5).